Here is a 1144-residue protein sequence, read N- to C-terminus: ATP-dependent helicase/deoxyribonuclease subunit B (1144 aa).

Residues 1–276 (MAIRYVFGRA…IDLDRNERPV (276 aa)) form the UvrD-like helicase ATP-binding domain. Residue 8 to 15 (GRAGRGKS) coordinates ATP. Residues 274–584 (RPVLPKVQEI…LVGSIERSKS (311 aa)) form the UvrD-like helicase C-terminal domain. 4 residues coordinate [4Fe-4S] cluster: Cys784, Cys1102, Cys1105, and Cys1111.

The protein belongs to the helicase family. AddB/RexB type 1 subfamily. As to quaternary structure, heterodimer of AddA and AddB. Requires Mg(2+) as cofactor. The cofactor is [4Fe-4S] cluster.

In terms of biological role, the heterodimer acts as both an ATP-dependent DNA helicase and an ATP-dependent, dual-direction single-stranded exonuclease. Recognizes the chi site generating a DNA molecule suitable for the initiation of homologous recombination. The AddB subunit has 5' -&gt; 3' nuclease activity but not helicase activity. The protein is ATP-dependent helicase/deoxyribonuclease subunit B of Alkaliphilus oremlandii (strain OhILAs) (Clostridium oremlandii (strain OhILAs)).